Here is a 600-residue protein sequence, read N- to C-terminus: MFGCQCPRKKKGTMTMMRLRTASLRSLNLDMRCTIRLLDDTEISFNIQRDTKGQFLLDYICNHYNLLEKDYFGIRFVDPEKQRHWLDPSKPVAKQMKSHPPYTMCFRVKFYPHEPLKIKEELTRYLLYLQIKRDIFHGRLLCCFADAAFLGACIVQAEIGDYDPDEHPDNYICDFKIFPKQSQKLERKIVEIHKNELRGQSPSVSEFNLLLKAHSLETYGVDPHPCKDSTGTTTFLGYTAAGFVVFQGNKRIHLIKWPDICKMKFDGKTFHVVVMQKEKKNILTYHTSTPAACKHLWKCGVENQAFYKYAKSSQVKTVTSSNIFFKGSRFRYCGKVAKEVVEASSKIQRDPPEVHRSLIPHSRSSYSLNKQLIINMEPLQPLIPSPNEEEEEEEEENQIDEGILLLQQSEASSAPVLGNSPARGLETTADVTHDEEESIREEPLTISEQVYNPSASLLPTPVDEGIDMLFNSPLRAEREKDDTDSFEDLEADEHAFLIAEEEEMKEARKALSWSYNFIMGNMQLNAFLKSFSKLLLAAIGLLMVVLPLLLILLESDIDVSFLREIRLTPEFEQFHHEYYCPFRKWVACKLSAALNLFGST.

Residues 31 to 311 (MRCTIRLLDD…ENQAFYKYAK (281 aa)) form the FERM domain. Residues 413 to 440 (SAPVLGNSPARGLETTADVTHDEEESIR) are disordered. Residues 534–554 (LLLAAIGLLMVVLPLLLILLE) form a helical membrane-spanning segment.

Its subcellular location is the membrane. The protein is FERM domain-containing protein 3 (frmd3) of Xenopus tropicalis (Western clawed frog).